The chain runs to 253 residues: Purine nucleoside phosphorylase DR_1966 (253 aa).

The Zn(2+) site is built by histidine 72, cysteine 106, and histidine 123.

Belongs to the purine nucleoside phosphorylase YfiH/LACC1 family. As to quaternary structure, homodimer. It depends on Cu(2+) as a cofactor. The cofactor is Zn(2+).

It carries out the reaction adenosine + phosphate = alpha-D-ribose 1-phosphate + adenine. The enzyme catalyses S-methyl-5'-thioadenosine + phosphate = 5-(methylsulfanyl)-alpha-D-ribose 1-phosphate + adenine. The catalysed reaction is inosine + phosphate = alpha-D-ribose 1-phosphate + hypoxanthine. It catalyses the reaction adenosine + H2O + H(+) = inosine + NH4(+). In terms of biological role, purine nucleoside enzyme that catalyzes the phosphorolysis of adenosine and inosine nucleosides, yielding D-ribose 1-phosphate and the respective free bases, adenine and hypoxanthine. Also catalyzes the phosphorolysis of S-methyl-5'-thioadenosine into adenine and S-methyl-5-thio-alpha-D-ribose 1-phosphate. Also has adenosine deaminase activity. The chain is Purine nucleoside phosphorylase DR_1966 from Deinococcus radiodurans (strain ATCC 13939 / DSM 20539 / JCM 16871 / CCUG 27074 / LMG 4051 / NBRC 15346 / NCIMB 9279 / VKM B-1422 / R1).